The following is a 176-amino-acid chain: PKHD-type hydroxylase Mfla_0096 (176 aa).

Residues 78-147 form the Fe2OG dioxygenase domain; that stretch reads KVFPPLFNRY…NQIARGTYGA (70 aa).

Fe(2+) serves as cofactor. L-ascorbate is required as a cofactor.

In Methylobacillus flagellatus (strain ATCC 51484 / DSM 6875 / VKM B-1610 / KT), this protein is PKHD-type hydroxylase Mfla_0096.